The chain runs to 230 residues: Ribonuclease 3 (230 aa).

Positions 10–133 constitute an RNase III domain; the sequence is DPRLLSRIGY…IIGAIYLDSS (124 aa). Glu46 serves as a coordination point for Mg(2+). Asp50 is a catalytic residue. Mg(2+) is bound by residues Asp119 and Glu122. Glu122 is a catalytic residue. Residues 161-230 enclose the DRBM domain; it reads DPKSRLQEYL…AAEILKLLEQ (70 aa).

This sequence belongs to the ribonuclease III family. As to quaternary structure, homodimer. It depends on Mg(2+) as a cofactor.

Its subcellular location is the cytoplasm. It carries out the reaction Endonucleolytic cleavage to 5'-phosphomonoester.. Its function is as follows. Digests double-stranded RNA. Involved in the processing of primary rRNA transcript to yield the immediate precursors to the large and small rRNAs (23S and 16S). Processes some mRNAs, and tRNAs when they are encoded in the rRNA operon. Processes pre-crRNA and tracrRNA of type II CRISPR loci if present in the organism. The polypeptide is Ribonuclease 3 (Acinetobacter baumannii (strain SDF)).